A 403-amino-acid chain; its full sequence is Eukaryotic translation initiation factor 3 subunit H (403 aa).

Positions 57–206 (VRLDGLALTK…VKAYRLSPSF (150 aa)) constitute an MPN domain. Positions 99–122 (ALPNPGRSNSERDEEEDRSSRNAT) are disordered.

This sequence belongs to the eIF-3 subunit H family. Component of the eukaryotic translation initiation factor 3 (eIF-3) complex.

The protein resides in the cytoplasm. Functionally, component of the eukaryotic translation initiation factor 3 (eIF-3) complex, which is involved in protein synthesis of a specialized repertoire of mRNAs and, together with other initiation factors, stimulates binding of mRNA and methionyl-tRNAi to the 40S ribosome. The eIF-3 complex specifically targets and initiates translation of a subset of mRNAs involved in cell proliferation. This chain is Eukaryotic translation initiation factor 3 subunit H, found in Mycosarcoma maydis (Corn smut fungus).